The following is a 460-amino-acid chain: Proline--tRNA ligase (460 aa).

Belongs to the class-II aminoacyl-tRNA synthetase family. ProS type 3 subfamily. Homodimer.

Its subcellular location is the cytoplasm. The catalysed reaction is tRNA(Pro) + L-proline + ATP = L-prolyl-tRNA(Pro) + AMP + diphosphate. Catalyzes the attachment of proline to tRNA(Pro) in a two-step reaction: proline is first activated by ATP to form Pro-AMP and then transferred to the acceptor end of tRNA(Pro). The sequence is that of Proline--tRNA ligase from Methanococcus maripaludis (strain C7 / ATCC BAA-1331).